A 524-amino-acid polypeptide reads, in one-letter code: 2-isopropylmalate synthase (524 aa).

The region spanning 15–275 (VVVFDTTMRD…PYGTSVDPVH (261 aa)) is the Pyruvate carboxyltransferase domain. Residues Asp-24, His-212, His-214, and Asn-248 each coordinate Mn(2+). The interval 401 to 524 (RVSRLRVVAG…RPEAAIASGF (124 aa)) is regulatory domain.

The protein belongs to the alpha-IPM synthase/homocitrate synthase family. LeuA type 1 subfamily. Homodimer. Mn(2+) is required as a cofactor.

The protein resides in the cytoplasm. It carries out the reaction 3-methyl-2-oxobutanoate + acetyl-CoA + H2O = (2S)-2-isopropylmalate + CoA + H(+). Its pathway is amino-acid biosynthesis; L-leucine biosynthesis; L-leucine from 3-methyl-2-oxobutanoate: step 1/4. Catalyzes the condensation of the acetyl group of acetyl-CoA with 3-methyl-2-oxobutanoate (2-ketoisovalerate) to form 3-carboxy-3-hydroxy-4-methylpentanoate (2-isopropylmalate). This is 2-isopropylmalate synthase from Caulobacter vibrioides (strain ATCC 19089 / CIP 103742 / CB 15) (Caulobacter crescentus).